A 938-amino-acid chain; its full sequence is Isoleucine--tRNA ligase (938 aa).

The 'HIGH' region signature appears at Pro58–His68. Lys183 is modified (N6-acetyllysine). Position 561 (Glu561) interacts with L-isoleucyl-5'-AMP. The 'KMSKS' region motif lies at Lys602–Ser606. Lys605 contributes to the ATP binding site. Zn(2+) is bound by residues Cys901, Cys904, Cys921, and Cys924.

It belongs to the class-I aminoacyl-tRNA synthetase family. IleS type 1 subfamily. Monomer. The cofactor is Zn(2+).

Its subcellular location is the cytoplasm. The catalysed reaction is tRNA(Ile) + L-isoleucine + ATP = L-isoleucyl-tRNA(Ile) + AMP + diphosphate. In terms of biological role, catalyzes the attachment of isoleucine to tRNA(Ile). As IleRS can inadvertently accommodate and process structurally similar amino acids such as valine, to avoid such errors it has two additional distinct tRNA(Ile)-dependent editing activities. One activity is designated as 'pretransfer' editing and involves the hydrolysis of activated Val-AMP. The other activity is designated 'posttransfer' editing and involves deacylation of mischarged Val-tRNA(Ile). The protein is Isoleucine--tRNA ligase of Escherichia fergusonii (strain ATCC 35469 / DSM 13698 / CCUG 18766 / IAM 14443 / JCM 21226 / LMG 7866 / NBRC 102419 / NCTC 12128 / CDC 0568-73).